The following is a 164-amino-acid chain: MASIAVCPGSFDPVTYGHLDIIKRGAKVFDQVYVAVLNNSSKKPLFTVEERMELLREVTRTLDNVHVESFHGLLVDYARSKKANAILRGLRAVSDFEYEMQITSMNRVLDENIETFFMMTNSQYAFLSSSIVKEVAKYNGDISELVPPVVEAALKRKFASAVAD.

S10 provides a ligand contact to substrate. Residues 10 to 11 (SF) and H18 contribute to the ATP site. Residues K42, L74, and R88 each contribute to the substrate site. ATP-binding positions include 89–91 (GLR), E99, and 124–130 (YAFLSSS).

The protein belongs to the bacterial CoaD family. As to quaternary structure, homohexamer. It depends on Mg(2+) as a cofactor.

Its subcellular location is the cytoplasm. It catalyses the reaction (R)-4'-phosphopantetheine + ATP + H(+) = 3'-dephospho-CoA + diphosphate. The protein operates within cofactor biosynthesis; coenzyme A biosynthesis; CoA from (R)-pantothenate: step 4/5. Functionally, reversibly transfers an adenylyl group from ATP to 4'-phosphopantetheine, yielding dephospho-CoA (dPCoA) and pyrophosphate. In Geobacillus thermodenitrificans (strain NG80-2), this protein is Phosphopantetheine adenylyltransferase.